An 839-amino-acid polypeptide reads, in one-letter code: MSDNDYERFEITDYDLDNEFNINRPRGRQSRHQQIYGIWADDSEEESGGEGGTKRRGRAARKPKDYTMPVNFVAGGIQQAGKKKKKALQADDEKGSQKEGAEADQGEESDDSAASGRPAFGQNDPGSSNSSSEEERPTLSRKQPSTTFQHRSHIASERNVGAWEQHTRGIGAKLLLQMGYEPGKGLGKDLQGISHPVQAHVRKGRGAIGAYGPETAASIGGKTNKSIKVDEDVREAKEFKDQLNKWRKGSAGGAEPMERQGKRYYYKSVEEVIAKGHTSGHLLSEKLSKKLGNVRVIDMTGPEKRVLSGYHALGQAKITPEETLYDTEATEKGSAPACVFAMPELTHNLQLLVSQCEQQIIAIDNQERECSSQQAALESEHRKLEEIVQLERNHIRTLEESLERVERLIDNPDLSLPQAERLFRELLVDYAAEFHEFGLADLAAGVIAPLLKRELVQWQPLENPTEPLPLIKKWRGMLQQGDAAEQQPRNVFDPYSSLIWAGVMPSFRSSAAAWQPKEHPPMASLLDAWAPLLPSWVLDSVLEQLVLPRLVAGVQEWDPLTDTVPIDSWVLPWHAILGSKLEEAVYPQIRSKLGIALRAWSPHDRSARAMLTPWQKAFPEEEMQEFLQRYIVPKLQATLGELIINPMHQDLELWQQVWEWHELIDPMYMAQLLDRHFFPRWMQVLVVWLNQSPDYAEISRWYTGWKSMLSEPLLREPSVKEHLRRALEIMHRASDTLLQPTVTPTPPPPVPPAPVIMMDLIHPPAQLEFKELVSQQCADLGIIFAPLPGRREMGKQIYRVGKLFCYIDRHVCMVSDGSFSNWKPVSLNHLLERSQTGIL.

The disordered stretch occupies residues 22–164 (INRPRGRQSR…ASERNVGAWE (143 aa)). Phosphoserine occurs at positions 43 and 47. Residue Thr53 is modified to Phosphothreonine. Positions 88-101 (LQADDEKGSQKEGA) are enriched in basic and acidic residues. Over residues 102 to 111 (EADQGEESDD) the composition is skewed to acidic residues. Residues 140-149 (SRKQPSTTFQ) are compositionally biased toward polar residues. The region spanning 167-213 (TRGIGAKLLLQMGYEPGKGLGKDLQGISHPVQAHVRKGRGAIGAYGP) is the G-patch domain. The stretch at 363–411 (IDNQERECSSQQAALESEHRKLEEIVQLERNHIRTLEESLERVERLIDN) forms a coiled coil.

This sequence belongs to the TFP11/STIP family. As to quaternary structure, identified in the spliceosome C complex. Interacts with pnut.

The protein resides in the nucleus. Its function is as follows. May be involved in pre-mRNA splicing. This is Septin-interacting protein 1 (sip1) from Drosophila melanogaster (Fruit fly).